The following is a 199-amino-acid chain: Ribosome maturation factor RimM (199 aa).

The PRC barrel domain maps to 95 to 168 (EDEFYHADLV…FVRVDPVAAG (74 aa)). The disordered stretch occupies residues 167–199 (AGLVEDEDGDAPREEDFDPKGRPRGPRDAGGNR). Basic and acidic residues predominate over residues 176–193 (DAPREEDFDPKGRPRGPR).

Belongs to the RimM family. As to quaternary structure, binds ribosomal protein uS19.

It is found in the cytoplasm. Its function is as follows. An accessory protein needed during the final step in the assembly of 30S ribosomal subunit, possibly for assembly of the head region. Essential for efficient processing of 16S rRNA. May be needed both before and after RbfA during the maturation of 16S rRNA. It has affinity for free ribosomal 30S subunits but not for 70S ribosomes. In Mesorhizobium japonicum (strain LMG 29417 / CECT 9101 / MAFF 303099) (Mesorhizobium loti (strain MAFF 303099)), this protein is Ribosome maturation factor RimM.